The following is a 1742-amino-acid chain: NACHT and WD repeat domain-containing protein 2 (1742 aa).

LRR repeat units follow at residues 386-410, 677-698, 724-747, 883-906, and 925-953; these read FYEY…GHIN, LEDV…TRPS, VKNV…LYLQ, YSQE…VIAF, and LPKL…SSMD. The 328-residue stretch at 410–737 folds into the NACHT domain; that stretch reads NPLVVYGGPC…TLLVWANRHL (328 aa). 11 WD repeats span residues 963–1004, 1007–1046, 1140–1179, 1229–1271, 1272–1311, 1314–1353, 1355–1394, 1396–1434, 1476–1516, 1522–1561, and 1614–1653; these read LASS…LLRQ, TAQS…LLSE, FSGG…NPQL, RHNE…ASLQ, ESSG…AMSN, KTGK…IEAV, KHEG…NLFR, NGQR…RVCN, EDGI…ICRR, NFLK…LRVV, and SLYK…DAAL. A disordered region spans residues 1702–1721; it reads PITVSDSSESNEATPSKKHN. Residues 1703-1715 are compositionally biased toward polar residues; the sequence is ITVSDSSESNEAT.

The protein is NACHT and WD repeat domain-containing protein 2 (Nwd2) of Mus musculus (Mouse).